Reading from the N-terminus, the 187-residue chain is Peptide deformylase (187 aa).

Residues cysteine 107 and histidine 149 each contribute to the Fe cation site. Residue glutamate 150 is part of the active site. Histidine 153 is a binding site for Fe cation.

This sequence belongs to the polypeptide deformylase family. Fe(2+) is required as a cofactor.

It catalyses the reaction N-terminal N-formyl-L-methionyl-[peptide] + H2O = N-terminal L-methionyl-[peptide] + formate. Functionally, removes the formyl group from the N-terminal Met of newly synthesized proteins. Requires at least a dipeptide for an efficient rate of reaction. N-terminal L-methionine is a prerequisite for activity but the enzyme has broad specificity at other positions. In Picosynechococcus sp. (strain ATCC 27264 / PCC 7002 / PR-6) (Agmenellum quadruplicatum), this protein is Peptide deformylase.